The following is a 156-amino-acid chain: Ribosome maturation factor RimP (156 aa).

Belongs to the RimP family.

The protein localises to the cytoplasm. Functionally, required for maturation of 30S ribosomal subunits. In Microcystis aeruginosa (strain NIES-843 / IAM M-2473), this protein is Ribosome maturation factor RimP.